The chain runs to 147 residues: TRAF-interacting protein with FHA domain-containing protein B (147 aa).

Positions 36–108 (LLVGRGQNTH…LGTINRISFS (73 aa)) constitute an FHA domain.

In terms of assembly, interacts with TIFA. As to expression, expressed at high levels in spleen and at moderate levels in lung, thymus, and small intestine.

Inhibits TIFA-mediated TRAF6 activation possibly by inducing a conformational change in TIFA. The chain is TRAF-interacting protein with FHA domain-containing protein B from Mus musculus (Mouse).